The chain runs to 296 residues: HTH-type transcriptional regulator GltR (296 aa).

An HTH lysR-type domain is found at 1-58; it reads MNIQLLQVFLTTAREGSISKAALTLNYAQSNVTNKIQQLENDLQTKLFYRHSRGITLT. Residues 18–37 constitute a DNA-binding region (H-T-H motif); it reads ISKAALTLNYAQSNVTNKIQ.

It belongs to the LysR transcriptional regulatory family.

Functionally, positive regulator of glutamate biosynthesis (gltAB genes). Negatively regulates its own expression. The sequence is that of HTH-type transcriptional regulator GltR (gltR) from Bacillus subtilis (strain 168).